Here is a 351-residue protein sequence, read N- to C-terminus: Tetraacyldisaccharide 4'-kinase (351 aa).

61–68 (TAGGTGKT) serves as a coordination point for ATP.

This sequence belongs to the LpxK family.

It catalyses the reaction a lipid A disaccharide + ATP = a lipid IVA + ADP + H(+). The protein operates within glycolipid biosynthesis; lipid IV(A) biosynthesis; lipid IV(A) from (3R)-3-hydroxytetradecanoyl-[acyl-carrier-protein] and UDP-N-acetyl-alpha-D-glucosamine: step 6/6. Transfers the gamma-phosphate of ATP to the 4'-position of a tetraacyldisaccharide 1-phosphate intermediate (termed DS-1-P) to form tetraacyldisaccharide 1,4'-bis-phosphate (lipid IVA). The chain is Tetraacyldisaccharide 4'-kinase from Xanthomonas campestris pv. campestris (strain 8004).